Reading from the N-terminus, the 305-residue chain is Cysteine synthase (305 aa).

Lysine 45 is subject to N6-(pyridoxal phosphate)lysine. Pyridoxal 5'-phosphate is bound by residues asparagine 75, 179–183, and serine 266; that span reads GSGGT.

The protein belongs to the cysteine synthase/cystathionine beta-synthase family. As to quaternary structure, homodimer. Pyridoxal 5'-phosphate is required as a cofactor.

It catalyses the reaction O-acetyl-L-serine + hydrogen sulfide = L-cysteine + acetate. Its pathway is amino-acid biosynthesis; L-cysteine biosynthesis; L-cysteine from L-serine: step 2/2. In Helicobacter pylori (strain J99 / ATCC 700824) (Campylobacter pylori J99), this protein is Cysteine synthase (cysM).